Consider the following 69-residue polypeptide: Conotoxin reg3.6 (69 aa).

A signal peptide spans 1–20 (MMSKLGVLLTICLLLFPLSA). Positions 21-52 (LPLDGDQPADQPAERVQDISPDQNPLFHLVKR) are excised as a propeptide. 3 cysteine pairs are disulfide-bonded: Cys54-Cys68, Cys55-Cys66, and Cys60-Cys69.

It belongs to the conotoxin M superfamily. Expressed by the venom duct.

The protein resides in the secreted. In Conus regius (Crown cone), this protein is Conotoxin reg3.6.